The following is a 639-amino-acid chain: ATP-dependent rRNA helicase spb4 (639 aa).

The Q motif signature appears at 14-42; sequence WEAVSPSLSEWVLDAVASWGFSKMTPVQA. A Helicase ATP-binding domain is found at 45-249; that stretch reads IPLFMAHKDV…RVGLRNPVKV (205 aa). 58–65 is an ATP binding site; sequence AVTGSGKT. The DEAD box signature appears at 197–200; it reads DEAD. Residues 283 to 437 form the Helicase C-terminal domain; sequence TLRPILTSLQ…PISISDSDAS (155 aa). A coiled-coil region spans residues 521–624; that stretch reads AYKDKQREKR…LRRAEKAAGK (104 aa). Residues 536 to 639 form a disordered region; sequence QESAEAGAQQ…GDDDEFEGFD (104 aa). The span at 575–622 shows a compositional bias: basic and acidic residues; it reads KHLQQEKRRWEKMTEEEKQKARETQKMLEEIRQKNEEARALRRAEKAA. A compositionally biased stretch (acidic residues) spans 628-639; sequence NDGDDDEFEGFD.

The protein belongs to the DEAD box helicase family. DDX55/SPB4 subfamily. Component of pre-60S ribosomal complexes.

Its subcellular location is the nucleus. It is found in the nucleolus. The catalysed reaction is ATP + H2O = ADP + phosphate + H(+). ATP-binding RNA helicase involved in the biogenesis of 60S ribosomal subunits. Binds 90S pre-ribosomal particles and dissociates from pre-60S ribosomal particles after processing of 27SB pre-rRNA. Required for the normal formation of 18S rRNA through the processing of pre-rRNAs at sites A0, A1 and A2, and the normal formation of 25S and 5.8S rRNAs through the processing of pre-rRNAs at sites C1 and C2. The sequence is that of ATP-dependent rRNA helicase spb4 from Aspergillus terreus (strain NIH 2624 / FGSC A1156).